We begin with the raw amino-acid sequence, 133 residues long: DNA-binding protein StpA (133 aa).

The segment at 81 to 115 is disordered; the sequence is AMPRSAKKRQPRPAKYRFTDFNGEEKTWTGQGRTP. Positions 85–95 are enriched in basic residues; the sequence is SAKKRQPRPAK. A DNA-binding region spans residues 111–116; the sequence is QGRTPK.

It belongs to the histone-like protein H-NS family. Forms homodimers, can interact with H-NS.

Its subcellular location is the cytoplasm. The protein resides in the nucleoid. In terms of biological role, a DNA-binding protein that acts in a fashion similar to H-NS, repressing gene transcription. A subset of H-NS/StpA-regulated genes require auxillary proteins for repression; these auxillary proteins (Hha and other similar proteins) may also modulate oligomerization of the H-NS/StpA complex. This chain is DNA-binding protein StpA (stpA), found in Salmonella typhi.